The sequence spans 208 residues: Sodium/potassium-transporting ATPase subunit beta-1-interacting protein 4 (208 aa).

4 consecutive transmembrane segments (helical) span residues 10–30 (LILL…FDFL), 35–55 (APIL…FGTL), 62–82 (VIAY…LICF), and 151–171 (ALQI…TSVF).

The protein belongs to the NKAIN family. In terms of assembly, interacts with atp1b1 C-terminus.

It localises to the cell membrane. The chain is Sodium/potassium-transporting ATPase subunit beta-1-interacting protein 4 (nkain4) from Xenopus tropicalis (Western clawed frog).